Here is a 223-residue protein sequence, read N- to C-terminus: Deoxyribose-phosphate aldolase (223 aa).

The active-site Proton donor/acceptor is aspartate 89. Lysine 152 serves as the catalytic Schiff-base intermediate with acetaldehyde. Lysine 181 acts as the Proton donor/acceptor in catalysis.

It belongs to the DeoC/FbaB aldolase family. DeoC type 1 subfamily.

It is found in the cytoplasm. The catalysed reaction is 2-deoxy-D-ribose 5-phosphate = D-glyceraldehyde 3-phosphate + acetaldehyde. It functions in the pathway carbohydrate degradation; 2-deoxy-D-ribose 1-phosphate degradation; D-glyceraldehyde 3-phosphate and acetaldehyde from 2-deoxy-alpha-D-ribose 1-phosphate: step 2/2. Catalyzes a reversible aldol reaction between acetaldehyde and D-glyceraldehyde 3-phosphate to generate 2-deoxy-D-ribose 5-phosphate. The polypeptide is Deoxyribose-phosphate aldolase (Bacillus cereus (strain AH187)).